Consider the following 190-residue polypeptide: Capsid protein (190 aa).

Position 1 is an N-acetylmethionine; by host (methionine 1).

This sequence belongs to the tymoviruses capsid protein family.

It is found in the virion. Functionally, self-assembles to form a T=3 icosahedral capsid composed of 180 copies of the capsid protein. The capsid encapsulates the single-stranded RNA genome. The chain is Capsid protein from Atropa belladonna (Belladonna).